Here is a 384-residue protein sequence, read N- to C-terminus: Protein V (384 aa).

Disordered regions lie at residues 1 to 23 (MDQD…GGRE) and 38 to 318 (SEPT…KKGH). Residues 7-20 (ILKEDSEVEREAPG) show a composition bias toward basic and acidic residues. The segment covering 50-59 (LHNTINTPQG) has biased composition (polar residues). Position 68 is a phosphoserine; by host (Ser-68). The segment covering 83-101 (RSGEESRVSGRTSKPEAEA) has biased composition (basic and acidic residues). A Phosphoserine; by host modification is found at Ser-125. A compositionally biased stretch (basic and acidic residues) spans 150–168 (GIEDENREMAAHPDKRGED). Positions 191 to 206 (ASNNGRSMEPGSSHSA) are enriched in polar residues. A phosphoserine; by host mark is found at Ser-192, Ser-249, Ser-257, and Ser-260. 8 residues coordinate Zn(2+): His-318, Cys-337, Cys-341, Cys-353, Cys-355, Cys-358, Cys-362, and Cys-365.

Belongs to the paramyxoviruses V protein family. As to quaternary structure, interacts with host IFIH1/MDA5 and DHX58/LGP2. Interacts with host IRF3. Interacts with host RIGI regulatory protein (via CARDs domain) and host TRIM25 (via SPRY domain); these interactions prevent TRIM25-mediated ubiquitination of RIG-I and disrupts downstream RIG-I signaling.

Its subcellular location is the host cytoplasm. Functionally, plays an essential role in the inhibition of host immune response. Prevents the establishment of cellular antiviral state by blocking interferon-alpha/beta (IFN-alpha/beta) production and signaling pathway. Interacts with host IFIH1/MDA5 and DHX58/LGP2 to inhibit the transduction pathway involved in the activation of IFN-beta promoter, thus protecting the virus against cell antiviral state. Also interacts with and inhibits host IRF3. Blocks the type I interferon signaling pathway by disrupting the RIG-I signaling pathway. The sequence is that of Protein V (P/V/C) from Sendai virus (strain Harris) (SeV).